The sequence spans 94 residues: MTKSELIERLAGQQSHIPAKAVEDAVKEMLEHMAATLAEGERIEIRGFGSFSLHYRAPRVGRNPKTGDKVELDGKYVPHFKPGKELRDRANIYG.

Belongs to the bacterial histone-like protein family. Heterodimer of an alpha and a beta chain.

Functionally, this protein is one of the two subunits of integration host factor, a specific DNA-binding protein that functions in genetic recombination as well as in transcriptional and translational control. The polypeptide is Integration host factor subunit beta (ihfB) (Serratia marcescens).